A 525-amino-acid polypeptide reads, in one-letter code: Arabinose import ATP-binding protein AraG 2 (525 aa).

The disordered stretch occupies residues 1–25; the sequence is MTDTTIRARGAQAAGSPAGAGPLDA. Positions 7-25 are enriched in low complexity; the sequence is RARGAQAAGSPAGAGPLDA. ABC transporter domains follow at residues 35 to 270 and 281 to 524; these read LELD…MVGR and REPG…LALP. 67–74 lines the ATP pocket; that stretch reads GENGAGKS.

The protein belongs to the ABC transporter superfamily. Arabinose importer (TC 3.A.1.2.2) family. The complex is composed of two ATP-binding proteins (AraG), two transmembrane proteins (AraH) and a solute-binding protein (AraF).

Its subcellular location is the cell inner membrane. The enzyme catalyses L-arabinose(out) + ATP + H2O = L-arabinose(in) + ADP + phosphate + H(+). Part of the ABC transporter complex AraFGH involved in arabinose import. Responsible for energy coupling to the transport system. The sequence is that of Arabinose import ATP-binding protein AraG 2 from Burkholderia thailandensis (strain ATCC 700388 / DSM 13276 / CCUG 48851 / CIP 106301 / E264).